Here is a 360-residue protein sequence, read N- to C-terminus: Peptide chain release factor 1 (360 aa).

Residue glutamine 235 is modified to N5-methylglutamine. A compositionally biased stretch (basic and acidic residues) spans 280-293 (DKQSHEQQAKEAAT). The tract at residues 280–300 (DKQSHEQQAKEAATRKSLIGS) is disordered.

This sequence belongs to the prokaryotic/mitochondrial release factor family. Post-translationally, methylated by PrmC. Methylation increases the termination efficiency of RF1.

The protein resides in the cytoplasm. Its function is as follows. Peptide chain release factor 1 directs the termination of translation in response to the peptide chain termination codons UAG and UAA. The protein is Peptide chain release factor 1 of Paraburkholderia phytofirmans (strain DSM 17436 / LMG 22146 / PsJN) (Burkholderia phytofirmans).